Here is a 266-residue protein sequence, read N- to C-terminus: Protein crossbronx-like (266 aa).

Residues 15–178 (KQGYHILAEY…VQEQAIASRN (164 aa)) form the UBC core domain.

This sequence belongs to the ubiquitin-conjugating enzyme family. FTS subfamily.

This chain is Protein crossbronx-like, found in Drosophila yakuba (Fruit fly).